The primary structure comprises 330 residues: NADH-quinone oxidoreductase subunit H (330 aa).

Transmembrane regions (helical) follow at residues 5-25 (LLTLILIVIKLGLVLGTVLTL), 78-98 (WVFMLAPAISTITALLAFAVI), 120-140 (IGLLYLFALSSLAVYGVALGG), 155-175 (AMAQMISYELAMGLAIVPVVM), 191-211 (SLPNMLRHPLAFFIFLVAIMA), 243-263 (FFVGEYLNLIVLGSMLTVLFL), 271-291 (LPGICWFLIKVLGVAFFFIWV), and 308-328 (WKILVPLGLLNILVTAAWLIW).

This sequence belongs to the complex I subunit 1 family. NDH-1 is composed of 14 different subunits. Subunits NuoA, H, J, K, L, M, N constitute the membrane sector of the complex.

Its subcellular location is the cell inner membrane. The enzyme catalyses a quinone + NADH + 5 H(+)(in) = a quinol + NAD(+) + 4 H(+)(out). Its function is as follows. NDH-1 shuttles electrons from NADH, via FMN and iron-sulfur (Fe-S) centers, to quinones in the respiratory chain. The immediate electron acceptor for the enzyme in this species is believed to be ubiquinone. Couples the redox reaction to proton translocation (for every two electrons transferred, four hydrogen ions are translocated across the cytoplasmic membrane), and thus conserves the redox energy in a proton gradient. This subunit may bind ubiquinone. This chain is NADH-quinone oxidoreductase subunit H, found in Syntrophotalea carbinolica (strain DSM 2380 / NBRC 103641 / GraBd1) (Pelobacter carbinolicus).